We begin with the raw amino-acid sequence, 473 residues long: Glutamate--tRNA ligase (473 aa).

A 'HIGH' region motif is present at residues 11 to 21 (PSPTGFLHIGG). The 'KMSKS' region signature appears at 240–244 (KLSKR). Lys-243 is a binding site for ATP.

It belongs to the class-I aminoacyl-tRNA synthetase family. Glutamate--tRNA ligase type 1 subfamily. As to quaternary structure, monomer.

The protein localises to the cytoplasm. The catalysed reaction is tRNA(Glu) + L-glutamate + ATP = L-glutamyl-tRNA(Glu) + AMP + diphosphate. Catalyzes the attachment of glutamate to tRNA(Glu) in a two-step reaction: glutamate is first activated by ATP to form Glu-AMP and then transferred to the acceptor end of tRNA(Glu). The sequence is that of Glutamate--tRNA ligase from Afipia carboxidovorans (strain ATCC 49405 / DSM 1227 / KCTC 32145 / OM5) (Oligotropha carboxidovorans).